A 294-amino-acid chain; its full sequence is Elongation factor Ts (294 aa).

The segment at Thr-81–Val-84 is involved in Mg(2+) ion dislocation from EF-Tu.

This sequence belongs to the EF-Ts family.

The protein localises to the cytoplasm. Associates with the EF-Tu.GDP complex and induces the exchange of GDP to GTP. It remains bound to the aminoacyl-tRNA.EF-Tu.GTP complex up to the GTP hydrolysis stage on the ribosome. In Hydrogenovibrio crunogenus (strain DSM 25203 / XCL-2) (Thiomicrospira crunogena), this protein is Elongation factor Ts.